We begin with the raw amino-acid sequence, 323 residues long: Probable cell division protein WhiA (323 aa).

Positions Thr275–Ser309 form a DNA-binding region, H-T-H motif.

The protein belongs to the WhiA family.

In terms of biological role, involved in cell division and chromosome segregation. The protein is Probable cell division protein WhiA of Listeria innocua serovar 6a (strain ATCC BAA-680 / CLIP 11262).